Consider the following 120-residue polypeptide: MGVFSFVCKSKGGEWTAKQHEGDLEASASSTYDLQRKLVQTALSADSSGGVQSSFSLVSPTSAVFVVVIGGGGGGGFAAGGGAAAGGGGGGEAAAATKEEEKKKEESEEEEGDFGFDLFG.

The segment covering 81 to 92 (GGAAAGGGGGGE) has biased composition (gly residues). The tract at residues 81–120 (GGAAAGGGGGGEAAAATKEEEKKKEESEEEEGDFGFDLFG) is disordered. Positions 97 to 106 (TKEEEKKKEE) are enriched in basic and acidic residues.

Belongs to the eukaryotic ribosomal protein P1/P2 family.

Functionally, plays an important role in the elongation step of protein synthesis. The protein is Large ribosomal subunit protein P3y (RPP3B) of Arabidopsis thaliana (Mouse-ear cress).